Here is a 118-residue protein sequence, read N- to C-terminus: Large ribosomal subunit protein uL18 (118 aa).

Residues 1 to 24 form a disordered region; sequence MISKPDKNKIRQKRHRRVRGKLSG. Residues 10 to 20 are compositionally biased toward basic residues; the sequence is IRQKRHRRVRG.

Belongs to the universal ribosomal protein uL18 family. As to quaternary structure, part of the 50S ribosomal subunit; part of the 5S rRNA/L5/L18/L25 subcomplex. Contacts the 5S and 23S rRNAs.

Its function is as follows. This is one of the proteins that bind and probably mediate the attachment of the 5S RNA into the large ribosomal subunit, where it forms part of the central protuberance. The sequence is that of Large ribosomal subunit protein uL18 from Streptococcus mutans serotype c (strain ATCC 700610 / UA159).